Consider the following 210-residue polypeptide: DNA dC-&gt;dU-editing enzyme APOBEC-3H (210 aa).

In terms of domain architecture, CMP/dCMP-type deaminase spans 4–126; sequence LTAKTFSLQF…PNYQEGLLLL (123 aa). His-54 contacts Zn(2+). The active-site Proton donor is the Glu-56. Zn(2+)-binding residues include Cys-85 and Cys-88. Residues 182 to 210 form a necessary and sufficient for localization to the cytoplasm region; sequence SRSVDVLENGLRSLQLGPVTPSSSIRNSR.

It belongs to the cytidine and deoxycytidylate deaminase family. Homodimer. It depends on Zn(2+) as a cofactor.

It localises to the cytoplasm. It carries out the reaction a 2'-deoxycytidine in single-stranded DNA + H2O + H(+) = a 2'-deoxyuridine in single-stranded DNA + NH4(+). Its activity is regulated as follows. Antiviral activity is neutralized by the simian immunodeficiency virus rhesus (SIV-mac) virion infectivity factor (VIF). DNA deaminase (cytidine deaminase) which acts as an inhibitor of retrovirus replication and retrotransposon mobility via deaminase-dependent and -independent mechanisms. Exhibits antiviral activity against vif-deficient HIV-1. After the penetration of retroviral nucleocapsids into target cells of infection and the initiation of reverse transcription, it can induce the conversion of cytosine to uracil in the minus-sense single-strand viral DNA, leading to G-to-A hypermutations in the subsequent plus-strand viral DNA. The resultant detrimental levels of mutations in the proviral genome, along with a deamination-independent mechanism that works prior to the proviral integration, together exert efficient antiretroviral effects in infected target cells. Selectively targets single-stranded DNA and does not deaminate double-stranded DNA or single- or double-stranded RNA. The protein is DNA dC-&gt;dU-editing enzyme APOBEC-3H of Macaca mulatta (Rhesus macaque).